The chain runs to 1178 residues: DNA-directed RNA polymerase subunit beta (1178 aa).

The segment at 1–37 (MLEGCILADSRQSKTAASPSPSRPQSSSNNSVPGAPN) is disordered. The span at 18 to 33 (SPSPSRPQSSSNNSVP) shows a compositional bias: low complexity.

This sequence belongs to the RNA polymerase beta chain family. As to quaternary structure, the RNAP catalytic core consists of 2 alpha, 1 beta, 1 beta' and 1 omega subunit. When a sigma factor is associated with the core the holoenzyme is formed, which can initiate transcription.

It catalyses the reaction RNA(n) + a ribonucleoside 5'-triphosphate = RNA(n+1) + diphosphate. In terms of biological role, DNA-dependent RNA polymerase catalyzes the transcription of DNA into RNA using the four ribonucleoside triphosphates as substrates. The chain is DNA-directed RNA polymerase subunit beta from Mycobacterium tuberculosis (strain CDC 1551 / Oshkosh).